Here is a 545-residue protein sequence, read N- to C-terminus: Solute carrier family 22 member 6 (545 aa).

The Cytoplasmic segment spans residues 1-9; it reads MAFNDLLKQ. Residues 10 to 30 form a helical membrane-spanning segment; sequence VGGVGRFQLIQVTMVVAPLLL. The Extracellular segment spans residues 31 to 129; it reads MASHNTLQNF…LVCSHRAFRQ (99 aa). N-linked (GlcNAc...) asparagine glycosylation is found at N39, N56, N86, N91, and N107. The chain crosses the membrane as a helical span at residues 130–150; sequence LAQSLFMVGVLLGAMMFGYLA. At 151–157 the chain is on the cytoplasmic side; the sequence is DRLGRRK. The chain crosses the membrane as a helical span at residues 158–177; that stretch reads VLILNYLQTAVSGTCAAYAP. Residue N178 is glycosylated (N-linked (GlcNAc...) asparagine). The Extracellular segment spans residues 178–180; that stretch reads NYT. A helical transmembrane segment spans residues 181 to 201; sequence VYCIFRLLSGMSLASIAINCM. The Cytoplasmic segment spans residues 202–218; the sequence is TLNMEWMPIHTRAYVGT. The helical transmembrane segment at 219–239 threads the bilayer; sequence LIGYVYSLGQFLLAGIAYAVP. The Extracellular portion of the chain corresponds to 240 to 242; that stretch reads HWR. The chain crosses the membrane as a helical span at residues 243–263; sequence HLQLAVSVPFFVAFIYSWFFI. The Cytoplasmic segment spans residues 264 to 331; sequence ESARWYSSSG…ELLRCPTLRR (68 aa). Residues 332-352 traverse the membrane as a helical segment; that stretch reads LFLCLSMLWFATSFAYYGLVM. The Extracellular segment spans residues 353–362; the sequence is DLQGFGVSMY. A helical transmembrane segment spans residues 363–383; the sequence is LIQVIFGAVDLPAKFVCFLVI. At 384–389 the chain is on the cytoplasmic side; sequence NSMGRR. The chain crosses the membrane as a helical span at residues 390–410; that stretch reads PAQLASLLLAGICILVNGIIP. Residues 411 to 419 lie on the Extracellular side of the membrane; sequence RGHTIIRTS. Residues 420 to 440 form a helical membrane-spanning segment; the sequence is LAVLGKGCLASSFNCIFLYTG. The Cytoplasmic portion of the chain corresponds to 441-450; it reads ELYPTMIRQT. A helical membrane pass occupies residues 451 to 471; it reads GLGMGSTMARVGSIVSPLISM. Residues 472–478 lie on the Extracellular side of the membrane; sequence TAEFYPS. Residues 479-499 traverse the membrane as a helical segment; sequence IPLFIFGAVPVAASAVTALLP. Topologically, residues 500-545 are cytoplasmic; that stretch reads ETLGQPLPDTVQDLKSRSRGKQKQQQLEQQKQMIPLQVSTQEKNGL. The segment at 515-545 is disordered; the sequence is SRSRGKQKQQQLEQQKQMIPLQVSTQEKNGL. Residues 522 to 531 show a composition bias toward low complexity; the sequence is KQQQLEQQKQ. Positions 536 to 545 are enriched in polar residues; the sequence is QVSTQEKNGL.

Belongs to the major facilitator (TC 2.A.1) superfamily. Organic cation transporter (TC 2.A.1.19) family. In terms of processing, glycosylated. Glycosylation is necessary for proper targeting of the transporter to the plasma membrane. Expressed in kidney. In kidney, restricted to the proximal convoluted tubule (representing S1 and S2 segments). In brain, expressed in neurons of the cortex cerebri and hippocampus as well as in the ependymal cell layer of the choroid plexus.

It localises to the basolateral cell membrane. The protein resides in the basal cell membrane. The catalysed reaction is (6R)-L-erythro-5,6,7,8-tetrahydrobiopterin(out) + a dicarboxylate(in) = (6R)-L-erythro-5,6,7,8-tetrahydrobiopterin(in) + a dicarboxylate(out). It carries out the reaction L-erythro-7,8-dihydrobiopterin(out) + a dicarboxylate(in) = L-erythro-7,8-dihydrobiopterin(in) + a dicarboxylate(out). The enzyme catalyses L-sepiapterin(out) + a dicarboxylate(in) = L-sepiapterin(in) + a dicarboxylate(out). It catalyses the reaction prostaglandin F2alpha(out) + a dicarboxylate(in) = prostaglandin F2alpha(in) + a dicarboxylate(out). The catalysed reaction is prostaglandin E2(out) + a dicarboxylate(in) = prostaglandin E2(in) + a dicarboxylate(out). It carries out the reaction 3',5'-cyclic AMP(out) + a dicarboxylate(in) = 3',5'-cyclic AMP(in) + a dicarboxylate(out). The enzyme catalyses 3',5'-cyclic GMP(out) + a dicarboxylate(in) = 3',5'-cyclic GMP(in) + a dicarboxylate(out). It catalyses the reaction urate(out) + a dicarboxylate(in) = urate(in) + a dicarboxylate(out). The catalysed reaction is kynurenate(out) + glutarate(in) = kynurenate(in) + glutarate(out). It carries out the reaction (indol-3-yl)acetate(out) + a dicarboxylate(in) = (indol-3-yl)acetate(in) + a dicarboxylate(out). The enzyme catalyses indoxyl sulfate(out) + a dicarboxylate(in) = indoxyl sulfate(in) + a dicarboxylate(out). It catalyses the reaction N-benzoylglycine(out) + a dicarboxylate(in) = N-benzoylglycine(in) + a dicarboxylate(out). The catalysed reaction is 3-carboxy-4-methyl-5-propyl-2-furanpropanoate(out) + a dicarboxylate(in) = 3-carboxy-4-methyl-5-propyl-2-furanpropanoate(in) + a dicarboxylate(out). In terms of biological role, secondary active transporter that functions as a Na(+)-independent organic anion (OA)/dicarboxylate antiporter where the uptake of one molecule of OA into the cell is coupled with an efflux of one molecule of intracellular dicarboxylate such as 2-oxoglutarate or glutarate. Mediates the uptake of OA across the basolateral side of proximal tubule epithelial cells, thereby contributing to the renal elimination of endogenous OA from the systemic circulation into the urine. Functions as a biopterin transporters involved in the uptake and the secretion of coenzymes tetrahydrobiopterin (BH4), dihydrobiopterin (BH2) and sepiapterin to urine, thereby determining baseline levels of blood biopterins. Transports prostaglandin E2 (PGE2) and prostaglandin F2-alpha (PGF2-alpha) and may contribute to their renal excretion. Involved in the transport of neuroactive tryptophan metabolites kynurenate (KYNA) and xanthurenate (XA). May transport glutamate. Also involved in the disposition of uremic toxins and potentially toxic xenobiotics by the renal organic anion secretory pathway, helping reduce their undesired toxicological effects on the body. Uremic toxins include the indoxyl sulfate (IS), hippurate/N-benzoylglycine (HA), indole acetate (IA) and 3-carboxy-4- methyl-5-propyl-2-furanpropionate(CMPF) and urate. Xenobiotics include the mycotoxin ochratoxin (OTA). May also contribute to the transport of organic compounds in testes across the blood-testis-barrier. In Mus musculus (Mouse), this protein is Solute carrier family 22 member 6.